Here is a 26-residue protein sequence, read N- to C-terminus: Omega-conotoxin TVIA (26 aa).

Intrachain disulfides connect Cys-1/Cys-16, Cys-8/Cys-19, and Cys-15/Cys-26. Residues Pro-4, Pro-10, and Pro-21 each carry the 4-hydroxyproline modification.

This sequence belongs to the conotoxin O1 superfamily. Expressed by the venom duct.

It is found in the secreted. In terms of biological role, omega-conotoxins act at presynaptic membranes, they bind and block voltage-gated calcium channels (Cav). In Conus tulipa (Fish-hunting cone snail), this protein is Omega-conotoxin TVIA.